The chain runs to 1681 residues: Sodium channel protein type 7 subunit alpha (1681 aa).

Residues 1 to 118 are Cytoplasmic-facing; sequence MLTSPEPKGL…RRAAIKALVH (118 aa). Residues 101-402 form an I repeat; sequence TLSPLNSLRR…ILTMTYEKEK (302 aa). A helical transmembrane segment spans residues 119–138; sequence PLFRLLILISVLTDSILMCM. At 139 to 142 the chain is on the extracellular side; the sequence is SNLP. The helical transmembrane segment at 143 to 168 threads the bilayer; it reads EWILAIENTLLGIYAFEILVKVIARG. The Cytoplasmic portion of the chain corresponds to 169–179; that stretch reads IWAGSFSFLGD. Residues 180–197 traverse the membrane as a helical segment; the sequence is LWNWLDFSVTLFELITRF. Topologically, residues 198–201 are extracellular; the sequence is SPLS. The helical transmembrane segment at 202–220 threads the bilayer; that stretch reads SFLMLKTIRTFRILKIIPL. The Cytoplasmic segment spans residues 221–238; that stretch reads NHGLQSIVMTLAQCLKKL. A helical membrane pass occupies residues 239 to 260; sequence FGAIALALFFLAVFSLLGMGLF. At 261-339 the chain is on the extracellular side; that stretch reads MGNLKHKCLR…PDNGFTSFDN (79 aa). Cysteines 268 and 308 form a disulfide. N-linked (GlcNAc...) asparagine glycans are attached at residues Asn-277, Asn-282, Asn-288, and Asn-310. The pore-forming intramembrane region spans 340–367; sequence FGWSLLAMFRLMTQDYPELLYHQILYAS. A topological domain (extracellular) is located at residue Gly-368. The helical transmembrane segment at 369–408 threads the bilayer; sequence KVYMIFFVMISFWFAFYLTSLFLGILTMTYEKEKQRACEE. At 409–506 the chain is on the cytoplasmic side; the sequence is SGGLDPKCQQ…EFADRVITHP (98 aa). The II repeat unit spans residues 488–757; it reads CSPCWVKLNE…QLAMARIKSG (270 aa). A helical membrane pass occupies residues 507 to 522; that stretch reads LADLFLVICIVLNICF. Topologically, residues 523 to 531 are extracellular; it reads LALEHFPMS. The chain crosses the membrane as a helical span at residues 532–560; it reads EELRSLLHVGNLVFIGIYTIEMILKIIAM. Over 561–569 the chain is Cytoplasmic; that stretch reads HPYGYFQIS. The helical transmembrane segment at 570 to 587 threads the bilayer; the sequence is WNIFDSILVVLELTEILL. Topologically, residues 588-593 are extracellular; the sequence is ADVEGL. The helical transmembrane segment at 594–609 threads the bilayer; that stretch reads AVLITVPLIFIKLGKY. At 610–626 the chain is on the cytoplasmic side; that stretch reads GPPFKSLMRILGSSLMA. Residues 627-655 form a helical membrane-spanning segment; it reads LKDLVLLLCIFVYFSAVFGMKLFGRSYKD. Residues 656–673 are Extracellular-facing; sequence CVCHIKEDCQPQRWHMSD. 2 disulfide bridges follow: Cys-658-Cys-664 and Cys-696-Cys-705. An intramembrane region (pore-forming) is located at residues 674-700; sequence FLHAYMTVFRILCGEWIETLWECMEVA. Residue Gly-701 is a topological domain, extracellular. Residues 702–732 form a helical membrane-spanning segment; sequence QAWCIPFYMMVILIGNLLILYLFVTLVSSFS. Over 733–934 the chain is Cytoplasmic; the sequence is YYDATSEVNK…KTCCKIVENS (202 aa). Residues 806–834 show a composition bias toward polar residues; that stretch reads YKDQSSSTEKTPVTESESQSLIASPSASE. Positions 806–875 are disordered; the sequence is YKDQSSSTEK…MKQSSSSECS (70 aa). Ser-843 bears the Phosphoserine mark. The III repeat unit spans residues 916 to 1224; sequence NGKIWKNIRK…KKQYRALKKL (309 aa). A helical transmembrane segment spans residues 935-953; sequence WFECFIGLVTLLCTGTLAL. At 954 to 961 the chain is on the extracellular side; sequence EDIYIDQR. A helical transmembrane segment spans residues 962–990; sequence KTTKILLEYADMIFAYIFILEMLLKWVAY. At 991–998 the chain is on the cytoplasmic side; sequence GFKAFFSN. A helical transmembrane segment spans residues 999–1020; sequence NWYKLDFMVVIVFCLSLIGKTR. Residue Glu-1021 is a topological domain, extracellular. The helical transmembrane segment at 1022–1040 threads the bilayer; that stretch reads DLNPLTSIKFLRALRVLSQ. Over 1041–1055 the chain is Cytoplasmic; it reads FERMKVVLRALIKTT. The helical transmembrane segment at 1056-1080 threads the bilayer; sequence LPTVSVFLVCLMIWLLFSVIGVQLF. Residues 1081-1127 lie on the Extracellular side of the membrane; the sequence is AGKFYECIDPTKGERFPVFEVMNKSQCEKLLFNESMPWENAKLNFDN. A disulfide bond links Cys-1087 and Cys-1107. N-linked (GlcNAc...) asparagine glycosylation is found at Asn-1103 and Asn-1113. The segment at residues 1128 to 1154 is an intramembrane region (pore-forming); sequence VGNGFLSLLQVATFNGWISIMNSAIDS. The Extracellular portion of the chain corresponds to 1155–1167; it reads VGVNMQPSFEYNL. A helical membrane pass occupies residues 1168–1202; it reads YMYSYFIIFVIFGLFLPLCMLIGVIIRNFNKQKIK. Residues 1203–1250 lie on the Cytoplasmic side of the membrane; sequence QGGSNIFITVKQKKQYRALKKLLYADVQKPTPRPRNKFQGFLFDLVTH. The IV repeat unit spans residues 1233-1531; it reads TPRPRNKFQG…WNRFDPDRTQ (299 aa). A helical membrane pass occupies residues 1251-1272; the sequence is RVFNVIIILLICFQATTIMIQK. At 1273–1276 the chain is on the extracellular side; that stretch reads DEQS. The chain crosses the membrane as a helical span at residues 1277–1305; sequence PQMETAIFWMNSIFVMLFTLECILKLTAF. Topologically, residues 1306–1312 are cytoplasmic; it reads RCHYFTS. A helical transmembrane segment spans residues 1313–1338; the sequence is AWNVHDFMVVIFSITGLLLPLTIGQY. Residues 1339–1341 are Extracellular-facing; sequence FVP. Residues 1342 to 1362 traverse the membrane as a helical segment; the sequence is PSLVQLILLSRVIHILRPGKG. At 1363 to 1377 the chain is on the cytoplasmic side; the sequence is PKVFHDLMLPLILAL. Residues 1378–1402 form a helical membrane-spanning segment; sequence PALLNISLLIFLVMFIYAIFGMYNF. The Extracellular portion of the chain corresponds to 1403–1420; sequence AYVKKEAGINDVSNFETF. The segment at residues 1421-1444 is an intramembrane region (pore-forming); that stretch reads GSSMLCLFQVTTFSGWDGMLDAIF. Residues 1445–1468 are Extracellular-facing; it reads NSQWSDCDPDKINPGTQVKGDCGS. A disulfide bridge links Cys-1451 with Cys-1466. The helical transmembrane segment at 1469-1504 threads the bilayer; that stretch reads PSVGISYFVSYILISWLIIVNMYIVLIMEFLSIPSQ. Residues 1505 to 1681 lie on the Cytoplasmic side of the membrane; it reads KKSRTLSEDD…EEKASIQTQI (177 aa). Basic and acidic residues predominate over residues 1647 to 1662; that stretch reads NVSDTPAIDDRRDDLT. Positions 1647–1681 are disordered; the sequence is NVSDTPAIDDRRDDLTSKGAHSGKIEEKASIQTQI.

Belongs to the sodium channel (TC 1.A.1.10) family. SCN7A subfamily. The sodium channel formed by SCN7A is probably a heterooligomeric complex consisting of the ion conducting pore forming alpha subunit SCN7A and regulatory beta subunits such as SCN3B. Interacts with ATP1A1; activates ATP1A1 and thereby indirectly signals to nearby neurons to regulate sodium homeostasis. In terms of tissue distribution, not tissue specific but widely expressed. Expressed in regions of the central nervous system that control body fluid ionic balance.

The protein localises to the cell membrane. The catalysed reaction is Na(+)(in) = Na(+)(out). Functionally, sodium leak channel functioning as an osmosensor regulating sodium ion levels in various tissues and organs. While most sodium channels are voltage-gated, SCN7A is not and lets sodium flow through membrane along its concentration gradient. In glial cells of the central nervous system, senses body-fluid sodium levels and controls salt intake behavior as well as voluntary water intake through activation of nearby neurons to maintain appropriate sodium levels in the body. By mediating sodium influx into keratinocytes, also plays a role in skin barrier homeostasis. The polypeptide is Sodium channel protein type 7 subunit alpha (Mus musculus (Mouse)).